The chain runs to 538 residues: Casein kinase I homolog 1 (538 aa).

The segment at 39–61 (SPARSSMTATTAANSNSNSSRDD) is disordered. Residues 41 to 57 (ARSSMTATTAANSNSNS) are compositionally biased toward low complexity. In terms of domain architecture, Protein kinase spans 69–353 (YKIGKKIGEG…ETADGQYDWM (285 aa)). Residues 75 to 83 (IGEGSFGVL) and Lys-98 contribute to the ATP site. The Proton acceptor role is filled by Asp-188. Disordered stretches follow at residues 366–428 (NKKP…KPKL) and 474–527 (QQQL…LAAS). Low complexity-rich tracts occupy residues 391–410 (QLQM…QQQQ) and 474–498 (QQQL…QFGA). 3 positions are modified to phosphoserine: Ser-522, Ser-523, and Ser-527. 2 S-palmitoyl cysteine lipidation sites follow: Cys-537 and Cys-538.

It belongs to the protein kinase superfamily. CK1 Ser/Thr protein kinase family. Casein kinase I subfamily. Palmitoylated by AKR1.

Its subcellular location is the cell membrane. It is found in the mitochondrion membrane. The enzyme catalyses L-seryl-[protein] + ATP = O-phospho-L-seryl-[protein] + ADP + H(+). It catalyses the reaction L-threonyl-[protein] + ATP = O-phospho-L-threonyl-[protein] + ADP + H(+). Functionally, casein kinases are operationally defined by their preferential utilization of acidic proteins such as caseins as substrates. The protein is Casein kinase I homolog 1 (YCK1) of Saccharomyces cerevisiae (strain ATCC 204508 / S288c) (Baker's yeast).